A 319-amino-acid polypeptide reads, in one-letter code: Malate dehydrogenase (319 aa).

Residues 10 to 15 (GSGNIG) and aspartate 34 each bind NAD(+). Substrate contacts are provided by arginine 83 and arginine 89. NAD(+) is bound by residues asparagine 96 and 119 to 121 (ITN). Substrate is bound by residues asparagine 121 and arginine 152. The active-site Proton acceptor is the histidine 176.

Belongs to the LDH/MDH superfamily. MDH type 3 family.

It catalyses the reaction (S)-malate + NAD(+) = oxaloacetate + NADH + H(+). Its function is as follows. Catalyzes the reversible oxidation of malate to oxaloacetate. This chain is Malate dehydrogenase, found in Paramagnetospirillum magneticum (strain ATCC 700264 / AMB-1) (Magnetospirillum magneticum).